A 261-amino-acid chain; its full sequence is Phosphatidylglycerol--prolipoprotein diacylglyceryl transferase (261 aa).

3 consecutive transmembrane segments (helical) span residues 20 to 40 (LAIH…VWLA), 54 to 74 (IIDF…LYYV), and 88 to 108 (IIAI…GAIV). Arginine 139 is an a 1,2-diacyl-sn-glycero-3-phospho-(1'-sn-glycerol) binding site. 2 helical membrane passes run 175 to 195 (MPTF…VMVF) and 235 to 255 (ARVS…LFVY).

Belongs to the Lgt family.

The protein resides in the cell membrane. It carries out the reaction L-cysteinyl-[prolipoprotein] + a 1,2-diacyl-sn-glycero-3-phospho-(1'-sn-glycerol) = an S-1,2-diacyl-sn-glyceryl-L-cysteinyl-[prolipoprotein] + sn-glycerol 1-phosphate + H(+). It participates in protein modification; lipoprotein biosynthesis (diacylglyceryl transfer). Catalyzes the transfer of the diacylglyceryl group from phosphatidylglycerol to the sulfhydryl group of the N-terminal cysteine of a prolipoprotein, the first step in the formation of mature lipoproteins. The chain is Phosphatidylglycerol--prolipoprotein diacylglyceryl transferase from Lactococcus lactis subsp. cremoris (strain MG1363).